Here is a 436-residue protein sequence, read N- to C-terminus: Glucose-1-phosphate adenylyltransferase (436 aa).

Alpha-D-glucose 1-phosphate-binding positions include Tyr112, Gly178, 193–194 (EK), and Ser211.

The protein belongs to the bacterial/plant glucose-1-phosphate adenylyltransferase family. In terms of assembly, homotetramer.

It carries out the reaction alpha-D-glucose 1-phosphate + ATP + H(+) = ADP-alpha-D-glucose + diphosphate. It participates in glycan biosynthesis; glycogen biosynthesis. Functionally, involved in the biosynthesis of ADP-glucose, a building block required for the elongation reactions to produce glycogen. Catalyzes the reaction between ATP and alpha-D-glucose 1-phosphate (G1P) to produce pyrophosphate and ADP-Glc. This is Glucose-1-phosphate adenylyltransferase from Histophilus somni (strain 129Pt) (Haemophilus somnus).